Here is a 409-residue protein sequence, read N- to C-terminus: MKPSHSSCEAAPLLPNMAETHYAPLSSAFPFVTSYQTGSSRLPEVSRSTERALREGKLLELVYGIKETVATLSQIPVSIFVTGDSGNGMSSFINALRVIGHDEDASAPTGVVRTTKTRTEYSSSHFPNVVLWDLPGLGATAQTVEDYVEEMKFSTCDLFIIIASEQFSSNHVKLSKIIQSMGKRFYIVWTKLDRDLSTSVLSEVRLLQNIQENIRENLQKEKVKYPPVFLVSSLDPLLYDFPKLRDTLHKDLSNIRCCEPLKTLYGTYEKIVGDKVAVWKQRIANESLKNSLGVRDDDNMGECLKVYRLIFGVDDESVQQVAQSMGTVVMEYKDNMKSQNFYTLRREDWKLRLMTCAIVNAFFRLLRFLPCVCCCLRRLRHKRMLFLVAQDTKNILEKILRDSIFPPQI.

Positions 75-251 (IPVSIFVTGD…PKLRDTLHKD (177 aa)) constitute an IRG-type G domain. Residues 84-91 (DSGNGMSS), 109-113 (TGVVR), and 191-193 (KLD) contribute to the GTP site. Ser-202 bears the Phosphoserine mark. 232-234 (SSL) lines the GTP pocket. A Glycyl lysine isopeptide (Lys-Gly) (interchain with G-Cter in ubiquitin) cross-link involves residue Lys-270. Residues 350–374 (KLRLMTCAIVNAFFRLLRFLPCVCC) form an alpha-K amphipathic helix region.

The protein belongs to the TRAFAC class dynamin-like GTPase superfamily. IRG family. As to quaternary structure, interacts with ULK1; promoting the coassembly of ULK1 and BECN1. Interacts with BECN1; enhancing BECN1-interacting partners and influencing the composition of the BECN1 complex. Interacts with ATG16L1. Interacts with NOD2; promoting Irgm1 'Lys-63'-linked polyubiquitination, which is required for interactions with the core autophagy factors. Interacts with STX17; promoting STX17 recruitment to autophagosomes. Interacts with ATG8 proteins (GABARAP, GABARAPL1, GABARAPL2, MAP1LC3A, MAP1LC3B and MAP1LC3C); promoting STX17 recruitment to autophagosomes. Interacts with TFEB; promoting association between TFEB and PPP3CB and TFEB dephosphorylation. Interacts with PPP3CB; promoting association between TFEB and PPP3CB and TFEB dephosphorylation. Interacts with NLRP3; preventing NLRP3 inflammasome assembly and promoting SQSTM1/p62-dependent autophagic degradation of NLRP3. Interacts with CGAS; promoting SQSTM1/p62-dependent autophagic degradation of CGAS. Interacts with RIGI/RIG-I; promoting SQSTM1/p62-dependent autophagic degradation of RIGI/RIG-I. Interacts with NOD1; promoting SQSTM1/p62-dependent autophagic degradation of RIGI/RIG-I. Interacts with NOD2; promoting SQSTM1/p62-dependent autophagic degradation of RIGI/RIG-I. Interacts with RIPK2; promoting SQSTM1/p62-dependent autophagic degradation of RIGI/RIG-I. Interacts with PIK3CA. In terms of processing, palmitoylated on C-terminal Cys residues. Palmitoylation, together with the alpha-K amphipathic helix, which binds phosphatidylinositol, mediate binding to membranes. Post-translationally, ubiquitinated via 'Lys-63'-linked polyubiquitination in a NOD2-dependent process. 'Lys-63'-linked polyubiquitination is required for interactions with the core autophagy factors. Ubiquitination at Lys-270 by the DCX(WDR77) complex, also named CLR4(WDR77) complex, in intestinal cells, leading to its degradation by the proteasome. In terms of tissue distribution, expressed in lung and primary macrophages.

It localises to the golgi apparatus membrane. It is found in the cell membrane. Its subcellular location is the cytoplasmic vesicle. The protein resides in the phagosome membrane. The protein localises to the autophagosome membrane. It localises to the lysosome membrane. It is found in the late endosome membrane. Its subcellular location is the mitochondrion membrane. The protein resides in the lipid droplet. The protein localises to the cell projection. It localises to the phagocytic cup. It catalyses the reaction GTP + H2O = GDP + phosphate + H(+). Immunity-related GTPase that plays important roles in innate immunity and inflammatory response. Acts as a dynamin-like protein that binds to intracellular membranes and promotes remodeling and trafficking of those membranes. Required for clearance of acute protozoan and bacterial infections by interacting with autophagy and lysosome regulatory proteins, thereby promoting the fusion of phagosomes with lysosomes for efficient degradation of cargo including microbes. Regulates selective autophagy, including xenophagy and mitophagy, both directly and indirectly. Directly regulates autophagy by acting as a molecular adapter that promotes the coassembly of the core autophagy machinery to mediate antimicrobial defense: Irgm1 (1) activates AMPK, which in turn phosphorylates ULK1 and BECN1 to induce autophagy, (2) promotes the coassembly of ULK1 and BECN1, enhancing BECN1-interacting partners and (3) influences the composition of the BECN1 complex, by competing with the negative regulators BCL2 and RUBCN, to trigger autophagy. Also activates autophagy by promoting recruitment of STX17 to autophagosomes. In collaboration with ATG8 proteins, regulate lysosomal biogenesis, a fundamental process for any autophagic pathway, by promoting TFEB dephosphorylation. Also modulates autophagy by assisting with autophagosome formation and preventing lysosomal deacidification. Regulates autophagy by affecting mitochondrial fusion and fission. Also involved in M1 macrophage activation for the production of proinflammatory cytokines. While activating autophagy, acts as a key negative regulator of the inflammatory and interferon responses both by (1) promoting mitophagy and (2) mediating autophagy-dependent degradation of effectors of the inflammatory response. Promotes degradation of damaged and IFNG/IFN-gamma-stressed mitochondria via mitophagy, preventing cytosolic release of ligands that activate inflammation. Negatively regulates interferon-signaling in hematopoietic stem cells, preserving hematopoietic stem cell number and function. Promotes expansion of activated CD4(+) T-cells by inhibiting IFNG/IFN-gamma signaling, thereby preventing Ifng-mediated cell death of CD4(+) T-cells. Acts as a suppressor of inflammation by promoting recruitment of inflammation effectors, such as CGAS, RIGI/RIG-I and NLRP3, to autophagosome membranes, leading to their SQSTM1/p62-dependent autophagic degradation. Also directly inhibits assembly of the NLRP3 inflammasome by preventing the association between NLRP3 and PYCARD. Acts as a negative regulator of antiviral innate immune response by suppressing the RIPK2-dependent pro-inflammatory response: mediates recruitment of RIPosomes, composed of RIPK2 and NOD1 or NOD2, to autophagosome membranes, promoting their SQSTM1/p62-dependent autophagic degradation. The polypeptide is Immunity-related GTPase family M protein 1 (Mus musculus (Mouse)).